Reading from the N-terminus, the 122-residue chain is Ribonuclease P protein component (122 aa).

The protein belongs to the RnpA family. In terms of assembly, consists of a catalytic RNA component (M1 or rnpB) and a protein subunit.

It catalyses the reaction Endonucleolytic cleavage of RNA, removing 5'-extranucleotides from tRNA precursor.. RNaseP catalyzes the removal of the 5'-leader sequence from pre-tRNA to produce the mature 5'-terminus. It can also cleave other RNA substrates such as 4.5S RNA. The protein component plays an auxiliary but essential role in vivo by binding to the 5'-leader sequence and broadening the substrate specificity of the ribozyme. The chain is Ribonuclease P protein component from Shouchella clausii (strain KSM-K16) (Alkalihalobacillus clausii).